The sequence spans 89 residues: Small ribosomal subunit protein uS15 (89 aa).

This sequence belongs to the universal ribosomal protein uS15 family. As to quaternary structure, part of the 30S ribosomal subunit. Forms a bridge to the 50S subunit in the 70S ribosome, contacting the 23S rRNA.

One of the primary rRNA binding proteins, it binds directly to 16S rRNA where it helps nucleate assembly of the platform of the 30S subunit by binding and bridging several RNA helices of the 16S rRNA. Functionally, forms an intersubunit bridge (bridge B4) with the 23S rRNA of the 50S subunit in the ribosome. This is Small ribosomal subunit protein uS15 from Buchnera aphidicola subsp. Cinara cedri (strain Cc).